The following is a 128-amino-acid chain: Iron-sulfur cluster insertion protein ErpA (128 aa).

Cys56, Cys120, and Cys122 together coordinate iron-sulfur cluster.

It belongs to the HesB/IscA family. In terms of assembly, homodimer. Iron-sulfur cluster is required as a cofactor.

Functionally, required for insertion of 4Fe-4S clusters for at least IspG. The polypeptide is Iron-sulfur cluster insertion protein ErpA (Xylella fastidiosa (strain M12)).